The sequence spans 118 residues: Mating-type P-specific polypeptide Pc (118 aa).

The segment at residues K29 to R97 is a DNA-binding region (HMG box).

The protein resides in the nucleus. Its function is as follows. Mating type proteins are sequence specific DNA-binding proteins that act as master switches in yeast differentiation by controlling gene expression in a cell type-specific fashion. Required for conjugation and efficient meiosis. The chain is Mating-type P-specific polypeptide Pc (mat2-Pc) from Schizosaccharomyces pombe (Fission yeast).